We begin with the raw amino-acid sequence, 360 residues long: Mannonate dehydratase (360 aa).

It belongs to the mannonate dehydratase family. It depends on Fe(2+) as a cofactor. The cofactor is Mn(2+).

It carries out the reaction D-mannonate = 2-dehydro-3-deoxy-D-gluconate + H2O. Its pathway is carbohydrate metabolism; pentose and glucuronate interconversion. In terms of biological role, catalyzes the dehydration of D-mannonate. This chain is Mannonate dehydratase (uxuA), found in Thermotoga neapolitana.